We begin with the raw amino-acid sequence, 322 residues long: Transaldolase (322 aa).

Lys-132 (schiff-base intermediate with substrate) is an active-site residue. Residues Ser-268 and Ser-269 each carry the phosphoserine modification.

It belongs to the transaldolase family. Type 1 subfamily. In terms of assembly, homodimer.

It carries out the reaction D-sedoheptulose 7-phosphate + D-glyceraldehyde 3-phosphate = D-erythrose 4-phosphate + beta-D-fructose 6-phosphate. The protein operates within carbohydrate degradation; pentose phosphate pathway; D-glyceraldehyde 3-phosphate and beta-D-fructose 6-phosphate from D-ribose 5-phosphate and D-xylulose 5-phosphate (non-oxidative stage): step 2/3. In terms of biological role, transaldolase is important for the balance of metabolites in the pentose-phosphate pathway. The polypeptide is Transaldolase (tal1) (Schizosaccharomyces pombe (strain 972 / ATCC 24843) (Fission yeast)).